A 221-amino-acid polypeptide reads, in one-letter code: MLFFRKRAEMPAPDQILPGRPTPLPTAERHFVNGRPLKGPYPEGIETALFGLGCFWGAERKFWQLGDGIWVTAVGYAAGTTPNPTYEEVCTGLTGHNEVVLVAYDPAAMPFERLLKTFWESHDPTQGMRQGNDVGTQYRSGLYVADAERRAQAEASRDAYGEALRAKGYGPITTEIRDPGPFYFAEAYHQQYLAKNPAGYCGLGGTGVACPIGTGVRNAAE.

Residue Cys54 is part of the active site.

It belongs to the MsrA Met sulfoxide reductase family.

The catalysed reaction is L-methionyl-[protein] + [thioredoxin]-disulfide + H2O = L-methionyl-(S)-S-oxide-[protein] + [thioredoxin]-dithiol. The enzyme catalyses [thioredoxin]-disulfide + L-methionine + H2O = L-methionine (S)-S-oxide + [thioredoxin]-dithiol. Functionally, has an important function as a repair enzyme for proteins that have been inactivated by oxidation. Catalyzes the reversible oxidation-reduction of methionine sulfoxide in proteins to methionine. The polypeptide is Peptide methionine sulfoxide reductase MsrA (Methylobacterium nodulans (strain LMG 21967 / CNCM I-2342 / ORS 2060)).